Consider the following 1116-residue polypeptide: DUB-associated factor 1 (1116 aa).

7 WD repeats span residues 21–62 (AHIL…NEPE), 91–132 (KNSD…DHDD), 160–200 (VHDG…EKMA), 219–262 (SMSP…EVIR), 266–305 (AHRT…DQTT), 387–426 (KKYG…FSVN), and 428–466 (GGFA…LLNT). Residues 578-600 (LDTGYNSESKKNNKDKKRKSTFK) are disordered. At serine 668 the chain carries Phosphoserine. Threonine 693 is modified (phosphothreonine). The span at 747–776 (ISSQDLPSNNTHNKLRSSENSRANSTSTLE) shows a compositional bias: polar residues. Disordered regions lie at residues 747–784 (ISSQ…KKPE) and 963–994 (FISA…PSTQ). Residues 967–987 (SDTTESSGNDSSDSSLGNGNE) are compositionally biased toward low complexity.

Interacts (via its WD repeats) with ubiquitin.

The protein resides in the cytoplasm. In terms of biological role, ubiquitin-binding protein involved in the resistance to phenanthroline, sanguinarine, nordihydroguaiaretic acid (NDGA), isopropyl (N-3-chloro-phenyl)-carbamate (IPCPC) and guanosine 5'-O-(2-thiodiphosphate). The sequence is that of DUB-associated factor 1 from Saccharomyces cerevisiae (strain ATCC 204508 / S288c) (Baker's yeast).